The primary structure comprises 349 residues: Anaerobic nitrite reductase Glb1-3 (349 aa).

2 Globin domains span residues 13–162 and 184–333; these read GFTE…AEMK and CFTE…AEMK. 12 residues coordinate heme b: serine 56, lysine 70, histidine 74, lysine 104, threonine 108, histidine 109, serine 227, lysine 241, histidine 245, lysine 275, threonine 279, and histidine 280.

This sequence belongs to the plant globin family. As to quaternary structure, monomer. Heme b is required as a cofactor.

It localises to the cytoplasm. It is found in the nucleus. The enzyme catalyses Fe(III)-heme b-[protein] + nitric oxide + H2O = Fe(II)-heme b-[protein] + nitrite + 2 H(+). Functionally, phytoglobin that regulates the fine tuning of nitric oxide (NO) concentration in the cytosol in response to sudden changes in O(2) availability, and performs both symbiotic and nonsymbiotic functions. Exhibits NO dioxygenase activity in the presence of O(2) but nitrite reductase (NiR) activity in the absence of O(2) (e.g. during flooding or in waterlogged soil). May not function as an oxygen storage or transport protein. Extremely reactive toward the physiological ligands O(2), nitric oxide (NO), and nitrite with a very high affinity for O(2) through an hexacoordinate heme iron because of a very low dissociation constant. In Medicago truncatula (Barrel medic), this protein is Anaerobic nitrite reductase Glb1-3.